The primary structure comprises 338 residues: tRNA pseudouridine synthase D (338 aa).

Catalysis depends on aspartate 79, which acts as the Nucleophile. The TRUD domain maps to 154–303; the sequence is GVPNYFGEQR…EEAWRANILY (150 aa).

Belongs to the pseudouridine synthase TruD family.

It carries out the reaction uridine(13) in tRNA = pseudouridine(13) in tRNA. Its function is as follows. Responsible for synthesis of pseudouridine from uracil-13 in transfer RNAs. This chain is tRNA pseudouridine synthase D, found in Legionella pneumophila (strain Corby).